A 193-amino-acid polypeptide reads, in one-letter code: Regulator of free ubiquitin chains 1 (193 aa).

It belongs to the RFU1 family.

The protein localises to the endosome. Inhibitor of the DOA4 deubiquitinase involved in the regulation of protein degradation by the proteasome and maintenance of a normal level of free ubiquitin. This Eremothecium gossypii (strain ATCC 10895 / CBS 109.51 / FGSC 9923 / NRRL Y-1056) (Yeast) protein is Regulator of free ubiquitin chains 1 (RFU1).